The primary structure comprises 157 residues: Cell cycle regulator of non-homologous end joining (157 aa).

At M1 the chain carries N-acetylmethionine. The KBM motif lies at 1 to 21 (METLQSETKTRVLPSWLTAQV). The tract at residues 77-147 (KACEQPALAG…SPEEEEEEDV (71 aa)) is disordered. The span at 98–107 (VSPHTSSGSS) shows a compositional bias: low complexity. Polar residues predominate over residues 123–136 (SPSQRPGGSSSACS). The XLM motif lies at 147-157 (VLKYVREIFFS).

As to quaternary structure, interacts (via KBM motif) with XRCC5/Ku80 and XRCC6/Ku70 heterodimer. Interacts (via XLF motif) with TRIM28/KAP1, ATM, MRE11, NBN and RAD50. Interacts with splicing factor SF3B1. Interacts with ERCC6L2; this interaction is DNA independent. Does not interact with XRCC5/Ku80 and XRCC6/Ku70 heterodimer. In terms of assembly, interacts (via KBM motif) with XRCC5/Ku80 and XRCC6/Ku70 heterodimer.

It localises to the cytoplasm. The protein localises to the nucleus. Its subcellular location is the chromosome. In terms of biological role, cell-cycle-specific regulator of classical non-homologous end joining (NHEJ) of DNA double-strand break (DSB) repair, which can act both as an activator or inhibitor of NHEJ, depending on the cell cycle phase. Acts as a regulator of DNA repair pathway choice by specifically inhibiting classical NHEJ during the S and G2 phases, thereby promoting error-free repair by homologous recombination during cell cycle phases when sister chromatids are present. Preferentially protects single-stranded overhangs at break sites by inhibiting classical NHEJ, thereby creating a local environment that favors homologous recombination. Acts via interaction with XRCC5/Ku80 and XRCC6/Ku70. In contrast, acts as an activator of NHEJ during G1 phase of the cell cycle: promotes classical NHEJ in G1 phase cells via multivalent interactions that increase the affinity of DNA damage response proteins for DSB-associated chromatin. Also involved in immunoglobulin V(D)J recombination. May also act as an indirect regulator of proteasome. This chain is Cell cycle regulator of non-homologous end joining, found in Homo sapiens (Human).